The sequence spans 340 residues: Extracellular matrix protein-binding protein emp (340 aa).

The signal sequence occupies residues 1–26 (MKKKLLVLTMSTLFATQIMNSNHAKA).

The protein resides in the cell surface. Its function is as follows. Adhesin that binds to the host cell extracellular matrix proteins fibronectin, fibrinogen, collagen, and vitronectin. The sequence is that of Extracellular matrix protein-binding protein emp (emp) from Staphylococcus aureus (strain MSSA476).